Reading from the N-terminus, the 357-residue chain is Heat-inducible transcription repressor HrcA (357 aa).

This sequence belongs to the HrcA family.

Its function is as follows. Negative regulator of class I heat shock genes (grpE-dnaK-dnaJ and groELS operons). Prevents heat-shock induction of these operons. This Chlorobium phaeovibrioides (strain DSM 265 / 1930) (Prosthecochloris vibrioformis (strain DSM 265)) protein is Heat-inducible transcription repressor HrcA.